Reading from the N-terminus, the 528-residue chain is Glutamyl-tRNA(Gln) amidotransferase subunit A, mitochondrial (528 aa).

Residue Lys76 is the Charge relay system of the active site. Positions 148–167 (YREKRKQNPHSENEDSDWLI) are disordered. Ser171 functions as the Charge relay system in the catalytic mechanism. Ser195 (acyl-ester intermediate) is an active-site residue.

The protein belongs to the amidase family. GatA subfamily. Subunit of the heterotrimeric GatCAB amidotransferase (AdT) complex, composed of A (QRSL1), B (GATB) and C (GATC) subunits.

It localises to the mitochondrion. The enzyme catalyses L-glutamyl-tRNA(Gln) + L-glutamine + ATP + H2O = L-glutaminyl-tRNA(Gln) + L-glutamate + ADP + phosphate + H(+). Allows the formation of correctly charged Gln-tRNA(Gln) through the transamidation of misacylated Glu-tRNA(Gln) in the mitochondria. The reaction takes place in the presence of glutamine and ATP through an activated gamma-phospho-Glu-tRNA(Gln). This chain is Glutamyl-tRNA(Gln) amidotransferase subunit A, mitochondrial, found in Homo sapiens (Human).